We begin with the raw amino-acid sequence, 245 residues long: Lactate utilization protein A (245 aa).

This sequence belongs to the LutA/YkgE family.

Functionally, is involved in L-lactate degradation and allows cells to grow with lactate as the sole carbon source. The sequence is that of Lactate utilization protein A from Exiguobacterium sp. (strain ATCC BAA-1283 / AT1b).